The sequence spans 153 residues: Deoxyuridine 5'-triphosphate nucleotidohydrolase (153 aa).

Residues 71–73, N84, 88–90, and M98 contribute to the substrate site; these read RSG and LID.

The protein belongs to the dUTPase family. Requires Mg(2+) as cofactor.

The catalysed reaction is dUTP + H2O = dUMP + diphosphate + H(+). The protein operates within pyrimidine metabolism; dUMP biosynthesis; dUMP from dCTP (dUTP route): step 2/2. This enzyme is involved in nucleotide metabolism: it produces dUMP, the immediate precursor of thymidine nucleotides and it decreases the intracellular concentration of dUTP so that uracil cannot be incorporated into DNA. The polypeptide is Deoxyuridine 5'-triphosphate nucleotidohydrolase (Wigglesworthia glossinidia brevipalpis).